Here is a 248-residue protein sequence, read N- to C-terminus: MLKKILLLALLPAIAFAEELPAPVKAIEKQGITIIKTFDAPGGMKGYLGKYQDMGVTIYLTPDGKHAISGYMYNEKGENLSNTLIEKEIYAPAGREMWQRMEQSHWLLDGKKDAPVIVYVFADPFCPYCKQFWQQARPWVDSGKVQLRTLLVGVIKPESPATAAAILASKDPAKTWQQYEASGGKLKLNVPANVSTEQMKVLSDNEKLMDDLGANVTPAIYYMSKENTLQQAVGLPDQKTLNIIMGNK.

Positions 1-17 are cleaved as a signal peptide; it reads MLKKILLLALLPAIAFA. An intrachain disulfide couples Cys-126 to Cys-129.

It belongs to the thioredoxin family. DsbC subfamily. As to quaternary structure, homodimer. Interacts with ErfK, YbiS and YnhG.

The protein resides in the periplasm. Its function is as follows. Involved in disulfide bond formation. DsbG and DsbC are part of a periplasmic reducing system that controls the level of cysteine sulfenylation, and provides reducing equivalents to rescue oxidatively damaged secreted proteins such as ErfK, YbiS and YnhG. Probably also functions as a disulfide isomerase with a narrower substrate specificity than DsbC. DsbG is maintained in a reduced state by DsbD. Displays chaperone activity in both redox states in vitro. The sequence is that of Thiol:disulfide interchange protein DsbG (dsbG) from Escherichia coli (strain K12).